Consider the following 451-residue polypeptide: POU domain, class 3, transcription factor 1 (451 aa).

Disordered regions lie at residues 1 to 21 (MATT…GTGP), 69 to 114 (AHPQ…GFHA), 134 to 154 (AHHL…HQPQ), 186 to 253 (GLHH…PSSD), and 395 to 451 (KRMT…GSVQ). Composition is skewed to gly residues over residues 11–20 (GPGGGAGGTG), 76–85 (TGGGGGGDWA), and 95–112 (AGGG…GGGF). Over residues 134-145 (AHHLGPAMSPSP) the composition is skewed to low complexity. Positions 190–199 (ALHEDGHEAQ) are enriched in basic and acidic residues. Positions 220-232 (AGGLHAAAAHLHP) are enriched in low complexity. Positions 247-321 (EDAPSSDDLE…LLNKWLEETD (75 aa)) constitute a POU-specific domain. Positions 339-398 (KRKKRTSIEVGVKGALESHFLKCPKPSAHEITGLADSLQLEKEVVRVWFCNRRQKEKRMT) form a DNA-binding region, homeobox. Pro residues predominate over residues 427-436 (PSAPPPPPPA).

This sequence belongs to the POU transcription factor family. Class-3 subfamily. Neural tissues and testis.

The protein resides in the nucleus. In terms of biological role, transcription factor that binds to the octamer motif (5'-ATTTGCAT-3'). Acts as a transcriptional activator when binding cooperatively with SOX4, SOX11, or SOX12 to gene promoters. Acts as a transcriptional repressor of myelin-specific genes. This Rattus norvegicus (Rat) protein is POU domain, class 3, transcription factor 1 (Pou3f1).